Reading from the N-terminus, the 103-residue chain is uncharacterized protein (103 aa).

This is an uncharacterized protein from Archaeoglobus fulgidus (strain ATCC 49558 / DSM 4304 / JCM 9628 / NBRC 100126 / VC-16).